The following is a 274-amino-acid chain: Shikimate dehydrogenase (NADP(+)) (274 aa).

Shikimate is bound by residues 14-16 (SLS) and Thr61. Residue Lys65 is the Proton acceptor of the active site. Shikimate-binding residues include Asn85 and Asp106. Residues 130-134 (GAGGA), 153-158 (NRTAER), and Ala217 each bind NADP(+). Position 219 (Tyr219) interacts with shikimate. Gly240 is an NADP(+) binding site.

The protein belongs to the shikimate dehydrogenase family. In terms of assembly, homodimer.

It carries out the reaction shikimate + NADP(+) = 3-dehydroshikimate + NADPH + H(+). It functions in the pathway metabolic intermediate biosynthesis; chorismate biosynthesis; chorismate from D-erythrose 4-phosphate and phosphoenolpyruvate: step 4/7. In terms of biological role, involved in the biosynthesis of the chorismate, which leads to the biosynthesis of aromatic amino acids. Catalyzes the reversible NADPH linked reduction of 3-dehydroshikimate (DHSA) to yield shikimate (SA). In Halorubrum lacusprofundi (strain ATCC 49239 / DSM 5036 / JCM 8891 / ACAM 34), this protein is Shikimate dehydrogenase (NADP(+)).